A 441-amino-acid chain; its full sequence is Xaa-Pro dipeptidase (441 aa).

Residues Asp-244, Asp-255, His-336, Glu-381, and Glu-420 each contribute to the Mn(2+) site.

Belongs to the peptidase M24B family. Bacterial-type prolidase subfamily. Mn(2+) serves as cofactor.

It carries out the reaction Xaa-L-Pro dipeptide + H2O = an L-alpha-amino acid + L-proline. Functionally, splits dipeptides with a prolyl residue in the C-terminal position. The polypeptide is Xaa-Pro dipeptidase (Xanthomonas euvesicatoria pv. vesicatoria (strain 85-10) (Xanthomonas campestris pv. vesicatoria)).